Here is a 108-residue protein sequence, read N- to C-terminus: DNA-directed RNA polymerase subunit omega (108 aa).

The tract at residues 1–32 (MTNSQSDAALAAVPDRFDPSAGGPGAYDTPLG) is disordered.

This sequence belongs to the RNA polymerase subunit omega family. The RNAP catalytic core consists of 2 alpha, 1 beta, 1 beta' and 1 omega subunit. When a sigma factor is associated with the core the holoenzyme is formed, which can initiate transcription.

The enzyme catalyses RNA(n) + a ribonucleoside 5'-triphosphate = RNA(n+1) + diphosphate. In terms of biological role, promotes RNA polymerase assembly. Latches the N- and C-terminal regions of the beta' subunit thereby facilitating its interaction with the beta and alpha subunits. The chain is DNA-directed RNA polymerase subunit omega from Mycobacterium avium (strain 104).